Reading from the N-terminus, the 428-residue chain is Light-independent protochlorophyllide reductase subunit N (428 aa).

Positions 31, 56, and 117 each coordinate [4Fe-4S] cluster.

This sequence belongs to the BchN/ChlN family. As to quaternary structure, protochlorophyllide reductase is composed of three subunits; BchL, BchN and BchB. Forms a heterotetramer of two BchB and two BchN subunits. The cofactor is [4Fe-4S] cluster.

It catalyses the reaction chlorophyllide a + oxidized 2[4Fe-4S]-[ferredoxin] + 2 ADP + 2 phosphate = protochlorophyllide a + reduced 2[4Fe-4S]-[ferredoxin] + 2 ATP + 2 H2O. It functions in the pathway porphyrin-containing compound metabolism; bacteriochlorophyll biosynthesis (light-independent). In terms of biological role, component of the dark-operative protochlorophyllide reductase (DPOR) that uses Mg-ATP and reduced ferredoxin to reduce ring D of protochlorophyllide (Pchlide) to form chlorophyllide a (Chlide). This reaction is light-independent. The NB-protein (BchN-BchB) is the catalytic component of the complex. The protein is Light-independent protochlorophyllide reductase subunit N of Rhodopseudomonas palustris (strain BisB5).